The chain runs to 263 residues: Follistatin-related protein 3 (263 aa).

A signal peptide spans 1–26; sequence MRPGAPGPLWPLPWGALAWAVGFVSS. In terms of domain architecture, TB spans 36–107; that stretch reads GVCWLQQGQE…SCDGVECGPG (72 aa). 13 disulfide bridges follow: C38–C61, C48–C92, C62–C95, C99–C110, C104–C119, C121–C153, C125–C146, C135–C167, C171–C182, C176–C192, C195–C229, C200–C222, and C211–C243. The N-linked (GlcNAc...) asparagine glycan is linked to N73. A Follistatin-like 1 domain is found at 99–119; that stretch reads CDGVECGPGKACRMLGGRPRC. A Kazal-like 1 domain is found at 113–169; sequence LGGRPRCECAPDCSGLPARLQVCGSDGATYRDECELRAARCRGHPDLSVMYRGRCRK. The 24-residue stretch at 170-193 folds into the Follistatin-like 2 domain; that stretch reads SCEHVVCPRPQSCVVDQTGSAHCV. The 57-residue stretch at 189–245 folds into the Kazal-like 2 domain; sequence SAHCVVCRAAPCPVPSSPGQELCGNNNVTYISSCHMRQATCFLGRSIGVRHAGSCAG. The N-linked (GlcNAc...) asparagine glycan is linked to N215. The interval 242–263 is disordered; sequence SCAGTPEEPPGGESAEEEENFV. At S255 the chain carries Phosphoserine; by FAM20C.

Interacts with INHBA and INHBB. Interacts with FN1. Interacts with ADAM12. Isoform 2 interacts with MLLT10; the interaction enhances MLLT10 in vitro transcriptional activity and self-association. Interacts with MSTN. Expressed in a wide range of tissues.

The protein resides in the secreted. It is found in the nucleus. Its function is as follows. Isoform 1 or the secreted form is a binding and antagonizing protein for members of the TGF-beta family, such as activin, BMP2 and MSTN. Inhibits activin A-, activin B-, BMP2- and MSDT-induced cellular signaling; more effective on activin A than on activin B. Involved in bone formation; inhibits osteoclast differentiation. Involved in hematopoiesis; involved in differentiation of hemopoietic progenitor cells, increases hematopoietic cell adhesion to fibronectin and seems to contribute to the adhesion of hematopoietic precursor cells to the bone marrow stroma. Isoform 2 or the nuclear form is probably involved in transcriptional regulation via interaction with MLLT10. The chain is Follistatin-related protein 3 (FSTL3) from Homo sapiens (Human).